Here is a 234-residue protein sequence, read N- to C-terminus: UPF0173 metal-dependent hydrolase RL2074 (234 aa).

Belongs to the UPF0173 family.

This Rhizobium johnstonii (strain DSM 114642 / LMG 32736 / 3841) (Rhizobium leguminosarum bv. viciae) protein is UPF0173 metal-dependent hydrolase RL2074.